Reading from the N-terminus, the 250-residue chain is 5-oxoprolinase subunit A (250 aa).

Belongs to the LamB/PxpA family. In terms of assembly, forms a complex composed of PxpA, PxpB and PxpC.

It carries out the reaction 5-oxo-L-proline + ATP + 2 H2O = L-glutamate + ADP + phosphate + H(+). Its function is as follows. Catalyzes the cleavage of 5-oxoproline to form L-glutamate coupled to the hydrolysis of ATP to ADP and inorganic phosphate. The chain is 5-oxoprolinase subunit A from Nocardia farcinica (strain IFM 10152).